The sequence spans 138 residues: ATP synthase epsilon chain (138 aa).

It belongs to the ATPase epsilon chain family. F-type ATPases have 2 components, CF(1) - the catalytic core - and CF(0) - the membrane proton channel. CF(1) has five subunits: alpha(3), beta(3), gamma(1), delta(1), epsilon(1). CF(0) has three main subunits: a, b and c.

The protein localises to the cell membrane. Produces ATP from ADP in the presence of a proton gradient across the membrane. The protein is ATP synthase epsilon chain (atpC) of Buchnera aphidicola subsp. Acyrthosiphon pisum (strain APS) (Acyrthosiphon pisum symbiotic bacterium).